A 1137-amino-acid polypeptide reads, in one-letter code: DENN domain-containing protein 2B (1137 aa).

The span at 1–12 (MTMTANKNSSIT) shows a compositional bias: polar residues. The disordered stretch occupies residues 1–99 (MTMTANKNSS…PTCPFKTASF (99 aa)). Phosphoserine is present on residues Ser30 and Ser32. The segment covering 32-43 (SPPPVLSPPRSP) has biased composition (pro residues). Over residues 49–64 (DSETSACRYPSHSSSR) the composition is skewed to polar residues. The segment covering 73 to 92 (PAPSPQNPQDPSPDTSPPTC) has biased composition (pro residues). Residue Thr231 is modified to Phosphothreonine. Position 233 is a phosphoserine (Ser233). The disordered stretch occupies residues 293-573 (KEQPGRGLPQ…HRLPRLPKRH (281 aa)). Positions 324–348 (EEPAGGASVSAGSRAVGVAGVAGEA) are enriched in low complexity. Thr364 is subject to Phosphothreonine. The residue at position 368 (Ser368) is a Phosphoserine. Residues 368 to 380 (SPSSQRLPSKSSL) show a composition bias toward low complexity. The segment covering 392–402 (RTFEYEADKNP) has biased composition (basic and acidic residues). Residues 401 to 447 (NPKSKPSNGLPPSPTPAAPPPLPSTPAPPVTRRPKKDMRGHRKSQSR) form an interaction with ABL1 region. Over residues 409-431 (GLPPSPTPAAPPPLPSTPAPPVT) the composition is skewed to pro residues. Over residues 432–446 (RRPKKDMRGHRKSQS) the composition is skewed to basic residues. The span at 456–481 (SSLQSLYPSSPTENGTENQPKFGSKS) shows a compositional bias: polar residues. A Phosphothreonine modification is found at Thr482. Positions 495 to 508 (LPKENPYEDVDLKS) are enriched in basic and acidic residues. 2 stretches are compositionally biased toward polar residues: residues 514-524 (KSQQLSENSLD) and 539-558 (SPPT…SGNW). Phosphoserine is present on Ser545. Over residues 562-573 (KSHRLPRLPKRH) the composition is skewed to basic residues. A phosphoserine mark is found at Ser574 and Ser622. Residues 641-661 (IETASLRDENSESESDSDDRF) form a disordered region. Positions 698 to 846 (EYFVVVSLKK…PFPAPGKTIK (149 aa)) constitute a uDENN domain. The cDENN domain occupies 868 to 1001 (RLEHVDFECL…LQAALEQALE (134 aa)). Residues 1003 to 1096 (KNELISQDSD…QDRELRKCRA (94 aa)) enclose the dDENN domain.

Interacts with ITSN1 and GRB2. Isoform 1 interacts with the SH3 domain of ABL1. Post-translationally, phosphorylated. Phosphorylation decreases ITSN1 binding. Widely expressed with the exception of peripheral blood lymphocytes. Isoform 1 is expressed in several epithelial and fibroblast (including tumorigenic) but absent in lymphoid cell lines (at protein level). Isoform 3 is expressed in primary cell or weakly tumorigenic but not in tumorigenic cell lines (at protein level).

The protein localises to the cytoplasm. Its subcellular location is the cell cortex. It is found in the cell membrane. The protein resides in the recycling endosome. Functionally, may be involved in cytoskeletal organization and tumorogenicity. Seems to be involved in a signaling transduction pathway leading to activation of MAPK1/ERK2. Plays a role in EGFR trafficking from recycling endosomes back to the cell membrane. In terms of biological role, guanine nucleotide exchange factor (GEF) which may activate RAB9A and RAB9B. Promotes the exchange of GDP to GTP, converting inactive GDP-bound Rab proteins into their active GTP-bound form. May block ERK2 activation stimulated by ABL1. May alter cell morphology and cell growth. This chain is DENN domain-containing protein 2B, found in Homo sapiens (Human).